Reading from the N-terminus, the 221-residue chain is Large ribosomal subunit protein uL3 (221 aa).

The segment at 123–156 (GFAGSIKRHNQSRGPESHGSRYHRRPGSMGPIKG) is disordered.

Belongs to the universal ribosomal protein uL3 family. In terms of assembly, part of the 50S ribosomal subunit. Forms a cluster with proteins L14 and L19.

One of the primary rRNA binding proteins, it binds directly near the 3'-end of the 23S rRNA, where it nucleates assembly of the 50S subunit. The protein is Large ribosomal subunit protein uL3 of Aster yellows witches'-broom phytoplasma (strain AYWB).